A 1184-amino-acid polypeptide reads, in one-letter code: uncharacterized protein (1184 aa).

2 disordered regions span residues 115-152 and 397-426; these read ETSS…AHVS and TYKP…VPER. Polar residues-rich tracts occupy residues 137–152 and 397–421; these read HVMN…AHVS and TYKP…TSHN. Position 686 is a phosphoserine (serine 686). 4 stretches are compositionally biased toward basic and acidic residues: residues 705-767, 783-792, 849-863, and 891-902; these read LSER…ESAH, FEHETEPSHY, SHAH…RDLG, and YLHDEKTRDTLT. Disordered stretches follow at residues 705-870 and 890-1017; these read LSER…FGDV and DYLH…SSPK. At serine 905 the chain carries Phosphoserine. Positions 920–932 are enriched in basic and acidic residues; it reads EDHPHASEAERAH. Positions 941 to 950 are enriched in low complexity; sequence SSESSPESQS. Over residues 999-1011 the composition is skewed to basic and acidic residues; that stretch reads PRERLDDNAKEIL. At serine 1018 the chain carries Phosphoserine. Disordered stretches follow at residues 1029–1107 and 1135–1154; these read NRKD…IGTQ and DVDN…KSRP. Residues 1032–1045 are compositionally biased toward basic and acidic residues; sequence DKAAVKRMLEEDSS. Positions 1073 to 1107 are enriched in polar residues; sequence PAVNNSTKPVAVTSKNGHSRNGSHAAHSNNVIGTQ. Low complexity predominate over residues 1138–1150; it reads NVVSGHSNVNGVS.

It localises to the cytoplasm. This is an uncharacterized protein from Schizosaccharomyces pombe (strain 972 / ATCC 24843) (Fission yeast).